The sequence spans 787 residues: Putative pentatricopeptide repeat-containing protein At1g69350, mitochondrial (787 aa).

The N-terminal 16 residues, 1 to 16 (MTQYMPLFRSCSSLRL), are a transit peptide targeting the mitochondrion. 19 PPR repeats span residues 33-63 (DPLPVTKLIESYAFMGSPDSSRLVFEAFPYP), 64-98 (DSFMYGVLIKCNVWCHLLDAAIDLYHRLVSETTQI), 99-134 (SKFVFPSVLRACAGSREHLSVGGKVHGRIIKGGVDD), 135-165 (DAVIETSLLCMYGQTGNLSDAEKVFDGMPVR), 166-200 (DLVAWSTLVSSCLENGEVVKALRMFKCMVDDGVEP), 201-235 (DAVTMISVVEGCAELGCLRIARSVHGQITRKMFDL), 236-266 (DETLCNSLLTMYSKCGDLLSSERIFEKIAKK), 267-301 (NAVSWTAMISSYNRGEFSEKALRSFSEMIKSGIEP), 302-336 (NLVTLYSVLSSCGLIGLIREGKSVHGFAVRRELDP), 338-368 (YESLSLALVELYAECGKLSDCETVLRVVSDR), 369-403 (NIVAWNSLISLYAHRGMVIQALGLFRQMVTQRIKP), 404-434 (DAFTLASSISACENAGLVPLGKQIHGHVIRT), 438-468 (DEFVQNSLIDMYSKSGSVDSASTVFNQIKHR), 469-503 (SVVTWNSMLCGFSQNGNSVEAISLFDYMYHSYLEM), 504-534 (NEVTFLAVIQACSSIGSLEKGKWVHHKLIIS), 538-568 (DLFTDTALIDMYAKCGDLNAAETVFRAMSSR), 569-603 (SIVSWSSMINAYGMHGRIGSAISTFNQMVESGTKP), 604-638 (NEVVFMNVLSACGHSGSVEEGKYYFNLMKSFGVSP), and 639-669 (NSEHFACFIDLLSRSGDLKEAYRTIKEMPFL). The segment at 674–749 (VWGSLVNGCR…VPGYSAIEID (76 aa)) is type E motif. Residues 750–780 (QKVFRFGAGEENRIQTDEIYRFLGNLQNLTN) form a type E(+) motif region.

This sequence belongs to the PPR family. PCMP-E subfamily.

The protein resides in the mitochondrion. In Arabidopsis thaliana (Mouse-ear cress), this protein is Putative pentatricopeptide repeat-containing protein At1g69350, mitochondrial (PCMP-E66).